A 294-amino-acid polypeptide reads, in one-letter code: tRNA dimethylallyltransferase (294 aa).

11–18 lines the ATP pocket; the sequence is GPTAVGKT. Position 13 to 18 (13 to 18) interacts with substrate; sequence TAVGKT. The segment at 36–39 is interaction with substrate tRNA; the sequence is DSQQ.

The protein belongs to the IPP transferase family. Monomer. Mg(2+) is required as a cofactor.

It carries out the reaction adenosine(37) in tRNA + dimethylallyl diphosphate = N(6)-dimethylallyladenosine(37) in tRNA + diphosphate. Functionally, catalyzes the transfer of a dimethylallyl group onto the adenine at position 37 in tRNAs that read codons beginning with uridine, leading to the formation of N6-(dimethylallyl)adenosine (i(6)A). The sequence is that of tRNA dimethylallyltransferase from Lactococcus lactis subsp. cremoris (strain MG1363).